Consider the following 461-residue polypeptide: Cysteine--tRNA ligase (461 aa).

C28 lines the Zn(2+) pocket. A 'HIGH' region motif is present at residues 30–40 (ITIYDLCHIGH). Zn(2+)-binding residues include C209, H234, and E238. The 'KMSKS' region motif lies at 266-270 (KMSKS). K269 is an ATP binding site.

The protein belongs to the class-I aminoacyl-tRNA synthetase family. In terms of assembly, monomer. Requires Zn(2+) as cofactor.

It is found in the cytoplasm. The enzyme catalyses tRNA(Cys) + L-cysteine + ATP = L-cysteinyl-tRNA(Cys) + AMP + diphosphate. The protein is Cysteine--tRNA ligase of Photorhabdus laumondii subsp. laumondii (strain DSM 15139 / CIP 105565 / TT01) (Photorhabdus luminescens subsp. laumondii).